The following is a 475-amino-acid chain: Probable sensor histidine kinase TcrY (475 aa).

At 1 to 153 (MGITAATEMA…NVDATMLQML (153 aa)) the chain is on the extracellular side. A helical membrane pass occupies residues 154 to 174 (IIFGIVTVIALVAATTAGIVI). The Cytoplasmic segment spans residues 175-475 (IKRALAPLRR…GWQPLESSPR (301 aa)). Positions 176–238 (KRALAPLRRV…MLDHIAAALS (63 aa)) constitute an HAMP domain. One can recognise a Histidine kinase domain in the interval 253 to 466 (DASHELRTPL…EFAVRLPLDG (214 aa)). Histidine 256 is subject to Phosphohistidine; by autocatalysis.

Homodimer. A divalent metal cation serves as cofactor. Autophosphorylated.

Its subcellular location is the cell membrane. The enzyme catalyses ATP + protein L-histidine = ADP + protein N-phospho-L-histidine.. Its function is as follows. Member of the two-component regulatory system TcrY/TcrX. Activates TcrX by phosphorylation. This is Probable sensor histidine kinase TcrY (tcrY) from Mycobacterium tuberculosis (strain ATCC 25618 / H37Rv).